The chain runs to 827 residues: Probable inorganic carbon transporter subunit DabA2 (827 aa).

Residues Cys-351, Asp-353, His-524, and Cys-539 each contribute to the Zn(2+) site.

It belongs to the inorganic carbon transporter (TC 9.A.2) DabA family. As to quaternary structure, forms a complex with DabB2, possibly a heterodimer. Zn(2+) serves as cofactor.

It localises to the cell inner membrane. Its activity is regulated as follows. Uptake of inorganic carbon by cells in the presence of thiosulphate is fully inhibited by the uncouplers carbonyl cyanide m-chlorophenyl hydrazone (CCCP), carbonyl cyanide p-trifluoromethoxyphenyl hydrazone (FCCP), S13 or SF6847. Not inhibited by the ATPase inhibitor N,N-dicyclohexylcarbodiimide (DCCD). Inorganic carbon uptake is inhibited by the ionophore CCCP, suggesting uptake is coupled to a cation gradient. Functionally, part of an energy-coupled inorganic carbon pump; its substrate may be carbon dioxide. Expression of both dabA2 and dabB2 (DAB2) restores growth in ambient air to E.coli deleted of its carbonic anhydrase genes (called CAfree, deletion of 'can' and 'cynT'); neither dabA2 or dabB2 alone is sufficient. Rescue is pH-independent, suggesting it transports CO(2) and not carbonate ions. Together the genes allow greater than normal uptake of inorganic carbon by E.coli. Uptake of carbon dioxide rather than bicarbonate has been suggested based on kinetic calculations. The polypeptide is Probable inorganic carbon transporter subunit DabA2 (Halothiobacillus neapolitanus (strain ATCC 23641 / c2) (Thiobacillus neapolitanus)).